The sequence spans 430 residues: N-lysine methyltransferase SMYD2-B (430 aa).

The 235-residue stretch at 5–239 (EGLERFDSPG…AGEEVFTSYI (235 aa)) folds into the SET domain. Position 15–17 (15–17 (KGR)) interacts with S-adenosyl-L-methionine. Zn(2+) is bound by residues cysteine 50, cysteine 53, cysteine 63, cysteine 66, cysteine 72, cysteine 76, histidine 84, and cysteine 88. The segment at 50-88 (CDFCFTRKEGLSKCGKCKQAFYCNVDCQKGDWPMHKLEC) adopts an MYND-type zinc-finger fold. Residues histidine 135, 204–205 (NH), and 256–258 (YFF) contribute to the S-adenosyl-L-methionine site.

It belongs to the class V-like SAM-binding methyltransferase superfamily.

Its subcellular location is the cytoplasm. The protein localises to the cytosol. It localises to the nucleus. It catalyses the reaction L-lysyl(4)-[histone H3] + 3 S-adenosyl-L-methionine = N(6),N(6),N(6)-trimethyl-L-lysyl(4)-[histone H3] + 3 S-adenosyl-L-homocysteine + 3 H(+). The enzyme catalyses L-lysyl-[protein] + S-adenosyl-L-methionine = N(6)-methyl-L-lysyl-[protein] + S-adenosyl-L-homocysteine + H(+). In terms of biological role, protein-lysine N-methyltransferase that methylates both histones and non-histone proteins, including p53/TP53 and RB1. Specifically trimethylates histone H3 'Lys-4' (H3K4me3) in vivo. The activity requires interaction with HSP90alpha. Shows even higher methyltransferase activity on p53/TP53. Monomethylates 'Lys-370' of p53/TP53, leading to decreased DNA-binding activity and subsequent transcriptional regulation activity of p53/TP53. Monomethylates RB1 at 'Lys-860'. The chain is N-lysine methyltransferase SMYD2-B (smyd2-b) from Xenopus laevis (African clawed frog).